The chain runs to 545 residues: CTP synthase (545 aa).

An amidoligase domain region spans residues 1 to 266; it reads MTTNYIFVTG…DDLVCARFGI (266 aa). CTP is bound at residue Ser-14. UTP is bound at residue Ser-14. ATP-binding positions include 15-20 and Asp-72; that span reads SLGKGI. Asp-72 and Glu-140 together coordinate Mg(2+). Residues 147–149, 187–192, and Lys-223 each bind CTP; these read DIE and KTKPTQ. UTP contacts are provided by residues 187–192 and Lys-223; that span reads KTKPTQ. 239–241 lines the ATP pocket; that stretch reads KDV. The Glutamine amidotransferase type-1 domain occupies 291-542; the sequence is TIGMVGKYIE…IKAAGENARG (252 aa). Gly-352 lines the L-glutamine pocket. Cys-379 (nucleophile; for glutamine hydrolysis) is an active-site residue. L-glutamine is bound by residues 380–383, Glu-403, and Arg-470; that span reads LGMQ. Catalysis depends on residues His-515 and Glu-517.

This sequence belongs to the CTP synthase family. As to quaternary structure, homotetramer.

It catalyses the reaction UTP + L-glutamine + ATP + H2O = CTP + L-glutamate + ADP + phosphate + 2 H(+). The catalysed reaction is L-glutamine + H2O = L-glutamate + NH4(+). The enzyme catalyses UTP + NH4(+) + ATP = CTP + ADP + phosphate + 2 H(+). Its pathway is pyrimidine metabolism; CTP biosynthesis via de novo pathway; CTP from UDP: step 2/2. Its activity is regulated as follows. Allosterically activated by GTP, when glutamine is the substrate; GTP has no effect on the reaction when ammonia is the substrate. The allosteric effector GTP functions by stabilizing the protein conformation that binds the tetrahedral intermediate(s) formed during glutamine hydrolysis. Inhibited by the product CTP, via allosteric rather than competitive inhibition. Catalyzes the ATP-dependent amination of UTP to CTP with either L-glutamine or ammonia as the source of nitrogen. Regulates intracellular CTP levels through interactions with the four ribonucleotide triphosphates. This chain is CTP synthase, found in Vibrio vulnificus (strain CMCP6).